The chain runs to 72 residues: MSLEILDQLEEKIKQAVETIQLLQLEIEELKEKNELSRQTNEQLRSENEHLKTEHHNWQERLRSLLGRIDNI.

A coiled-coil region spans residues 1–71; the sequence is MSLEILDQLE…LRSLLGRIDN (71 aa). A disordered region spans residues 36-56; it reads LSRQTNEQLRSENEHLKTEHH. Over residues 44 to 56 the composition is skewed to basic and acidic residues; the sequence is LRSENEHLKTEHH.

The protein belongs to the ZapB family. As to quaternary structure, homodimer. The ends of the coiled-coil dimer bind to each other, forming polymers. Interacts with FtsZ.

The protein localises to the cytoplasm. Functionally, non-essential, abundant cell division factor that is required for proper Z-ring formation. It is recruited early to the divisome by direct interaction with FtsZ, stimulating Z-ring assembly and thereby promoting cell division earlier in the cell cycle. Its recruitment to the Z-ring requires functional FtsA or ZipA. The protein is Cell division protein ZapB of Histophilus somni (strain 129Pt) (Haemophilus somnus).